Consider the following 398-residue polypeptide: RNA-binding protein rnc1 (398 aa).

A disordered region spans residues 40 to 78 (KVSIPTPKPSTPLSTLTNGSTIQQSMTNQPEPTSQVPPI). Position 50 is a phosphothreonine (Thr-50). The segment covering 57–76 (NGSTIQQSMTNQPEPTSQVP) has biased composition (polar residues). 2 KH domains span residues 93-157 (QLTL…YRFI) and 178-243 (PRKL…IWEI). Over residues 274–290 (ASTASPQQVSPPAAPST) the composition is skewed to low complexity. Residues 274–295 (ASTASPQQVSPPAAPSTTSGEA) are disordered. The region spanning 320 to 385 (KVTQNISIPA…EENEKALFLL (66 aa)) is the KH 3 domain.

Phosphorylated by pmk1. Phosphorylation causes enhancement of the RNA-binding activity.

It is found in the cytoplasm. Its function is as follows. Binds and stabilizes pmp1 mRNA and hence acts as a negative regulator of pmk1 signaling. Overexpression suppresses the Cl(-) sensitivity of calcineurin deletion. This is RNA-binding protein rnc1 from Schizosaccharomyces pombe (strain 972 / ATCC 24843) (Fission yeast).